We begin with the raw amino-acid sequence, 54 residues long: Ovomucoid (54 aa).

A Kazal-like domain is found at 4 to 54 (VDCSEYPKPACTMEHRPLCGSDNQTYDNKCNFCNAVVESNGTLTLSHFGKC). 3 disulfides stabilise this stretch: Cys6–Cys36, Cys14–Cys33, and Cys22–Cys54. N-linked (GlcNAc...) asparagine glycosylation occurs at Asn43.

The protein localises to the secreted. This Guttera pucherani (Eastern crested guineafowl) protein is Ovomucoid.